Consider the following 247-residue polypeptide: Phycobilisome rod-core linker polypeptide CpcG2 (247 aa).

The PBS-linker domain maps to 11-189 (SSQNQRVPGY…YWRDKLENER (179 aa)).

The protein belongs to the phycobilisome linker protein family. In terms of assembly, the phycobilisome is a hemidiscoidal structure that is composed of two distinct substructures: a core complex and a number of rods radiating from the core.

The protein resides in the cellular thylakoid membrane. Functionally, rod-core linker protein required for attachment of phycocyanin to allophycocyanin in cores of phycobilisomes. In terms of biological role, linker polypeptides determine the state of aggregation and the location of the disk-shaped phycobiliprotein units within the phycobilisome and modulate their spectroscopic properties in order to mediate a directed and optimal energy transfer. The sequence is that of Phycobilisome rod-core linker polypeptide CpcG2 (cpcG2) from Mastigocladus laminosus (Fischerella sp.).